The following is a 266-amino-acid chain: Inositol-1-monophosphatase (266 aa).

Mg(2+) contacts are provided by E69, D86, L88, and D89. E69 serves as a coordination point for substrate. Substrate-binding positions include 88–91 (LDGT), R185, and D214. A Mg(2+)-binding site is contributed by D214.

It belongs to the inositol monophosphatase superfamily. The cofactor is Mg(2+).

It carries out the reaction a myo-inositol phosphate + H2O = myo-inositol + phosphate. In Rhizobium meliloti (strain 1021) (Ensifer meliloti), this protein is Inositol-1-monophosphatase (suhB).